We begin with the raw amino-acid sequence, 329 residues long: Probable aryl-alcohol dehydrogenase AAD4 (329 aa).

The active-site Proton donor is Y30. A substrate-binding site is contributed by H105. NADP(+) is bound at residue 190 to 200; it reads DVMGGGRFQSK.

This sequence belongs to the aldo/keto reductase family. Aldo/keto reductase 2 subfamily.

The chain is Probable aryl-alcohol dehydrogenase AAD4 (AAD4) from Saccharomyces cerevisiae (strain ATCC 204508 / S288c) (Baker's yeast).